Reading from the N-terminus, the 72-residue chain is Large ribosomal subunit protein bL31 (72 aa).

Residues C16, C18, C37, and C40 each coordinate Zn(2+).

The protein belongs to the bacterial ribosomal protein bL31 family. Type A subfamily. As to quaternary structure, part of the 50S ribosomal subunit. The cofactor is Zn(2+).

Its function is as follows. Binds the 23S rRNA. The sequence is that of Large ribosomal subunit protein bL31 from Idiomarina loihiensis (strain ATCC BAA-735 / DSM 15497 / L2-TR).